A 390-amino-acid chain; its full sequence is ATP-sensitive inward rectifier potassium channel 11 (390 aa).

Topologically, residues 1 to 65 are cytoplasmic; that stretch reads MLSRKGIIPE…LQDVFTTLVD (65 aa). ATP-binding residues include Asn48 and Arg50. Residues 66-92 traverse the membrane as a helical segment; it reads LKWTHTLLIFTMSFLCSWLLFAMVWWL. At 93–116 the chain is on the extracellular side; the sequence is IAFAHGDLAPGEGAAVPCVTSIHS. Cys110 and Cys142 are oxidised to a cystine. Residues 117–133 constitute an intramembrane region (discontinuously helical; Pore-forming); that stretch reads FSSAFLFSIEVQVTIGF. K(+) contacts are provided by Thr130 and Phe133. Positions 130 to 135 match the Selectivity filter motif; the sequence is TIGFGG. At 134-142 the chain is on the extracellular side; that stretch reads GGRMVTEEC. Residues 143-171 traverse the membrane as a helical segment; sequence PLAILILIVQNIVGLMINAIMLGCIFMKT. Residues 172–390 lie on the Cytoplasmic side of the membrane; sequence AQAHRRAETL…KFSISPDSLS (219 aa). Position 176 (Arg176) interacts with a 1,2-diacyl-sn-glycero-3-phospho-(1D-myo-inositol-4,5-bisphosphate). Tyr330 contacts ATP. Position 341 is a phosphothreonine; by MAPK1 (Thr341). Ser385 is modified (phosphoserine; by MAPK1).

Belongs to the inward rectifier-type potassium channel (TC 1.A.2.1) family. KCNJ11 subfamily. In terms of assembly, homotetramer; the homotetramer binds four ATP molecules (one ATP per subunit). Forms an heterooctamer with ABCC8/SUR1; one KCNJ11 homotetramer interacts with four ABCC8/SUR1 molecules. Interacts with ABCC9/SUR2. Post-translationally, phosphorylation by MAPK1 results in changes in channel gating that destabilize the closed states and reduce the ATP sensitivity.

The protein localises to the membrane. It catalyses the reaction K(+)(in) = K(+)(out). With respect to regulation, KATP channels are regulated by cytoplasmic ATP/ADP ratios; ATP inhibits the channel by closing the pore, while ADP activates the channel. Activated by phosphatidylinositol 4,5-biphosphate (PtdIns(4,5)P2). In terms of biological role, inward rectifier potassium channel that forms the pore of ATP-sensitive potassium channels (KATP), regulating potassium permeability as a function of cytoplasmic ATP and ADP concentrations in many different cells. Inward rectifier potassium channels are characterized by a greater tendency to allow potassium to flow into the cell rather than out of it. Their voltage dependence is regulated by the concentration of extracellular potassium; as external potassium is raised, the voltage range of the channel opening shifts to more positive voltages. The inward rectification is mainly due to the blockage of outward current by internal magnesium. Can be blocked by extracellular barium. In pancreatic cells, it forms KATP channels with ABCC8/SUR1. Can form cardiac and smooth muscle-type KATP channels with ABCC9. This Oryctolagus cuniculus (Rabbit) protein is ATP-sensitive inward rectifier potassium channel 11 (KCNJ11).